A 353-amino-acid chain; its full sequence is Guanine nucleotide-binding protein subunit alpha (353 aa).

The tract at residues 1 to 26 (MGCGMSTEEKEGKARNEEIENQLKRD) is disordered. Gly2 carries the N-myristoyl glycine lipid modification. Cys3 carries the S-palmitoyl cysteine lipid modification. The segment covering 7 to 26 (TEEKEGKARNEEIENQLKRD) has biased composition (basic and acidic residues). The G-alpha domain occupies 32–353 (NEIKMLLLGA…QENLRLCGLI (322 aa)). A G1 motif region spans residues 35–48 (KMLLLGAGESGKST). GTP-binding residues include Glu43, Ser44, Gly45, Lys46, Ser47, Thr48, Asp150, Leu175, Thr181, Gly203, Asn269, Lys270, Asp272, and Ala325. Ser47 serves as a coordination point for Mg(2+). Positions 173-181 (DVLRSRVKT) are G2 motif. Thr181 lines the Mg(2+) pocket. The tract at residues 196-205 (YRMFDVGGQR) is G3 motif. Residues 265–272 (ILFLNKID) form a G4 motif region. The interval 323 to 328 (TCATDT) is G5 motif.

This sequence belongs to the G-alpha family. G(q) subfamily. As to quaternary structure, g proteins are composed of 3 units; alpha, beta and gamma. The alpha chain contains the guanine nucleotide binding site. Mg(2+) is required as a cofactor.

Its function is as follows. Guanine nucleotide-binding proteins (G proteins) are involved as modulators or transducers in various transmembrane signaling systems. The chain is Guanine nucleotide-binding protein subunit alpha from Cryphonectria parasitica (Chestnut blight fungus).